A 327-amino-acid chain; its full sequence is Cytochrome c biogenesis protein CcsA (327 aa).

Helical transmembrane passes span 13–33 (ISFS…LVNL), 46–66 (GIII…IYSG), 73–93 (LYES…VSYF), 101–121 (LNAI…SGLL), 145–165 (MILG…LLVI), 233–253 (IISL…VWAN), 262–282 (WDPK…YLHI), and 294–314 (AIVA…VNLL).

Belongs to the CcmF/CycK/Ccl1/NrfE/CcsA family. As to quaternary structure, may interact with Ccs1.

The protein resides in the plastid. It localises to the chloroplast thylakoid membrane. Required during biogenesis of c-type cytochromes (cytochrome c6 and cytochrome f) at the step of heme attachment. This is Cytochrome c biogenesis protein CcsA from Lobularia maritima (Sweet alyssum).